Here is a 729-residue protein sequence, read N- to C-terminus: Fatty acid oxidation complex subunit alpha (729 aa).

Residues 1–189 form an enoyl-CoA hydratase/isomerase region; it reads MLYQSETLQL…KIGLVDAVVD (189 aa). Residue Asp-296 coordinates substrate. The 3-hydroxyacyl-CoA dehydrogenase stretch occupies residues 311–729; sequence AAPKLAAVLG…LLDVSTNQPA (419 aa). NAD(+) contacts are provided by residues Met-324, Asp-343, 400–402, Lys-407, and Ser-429; that span reads VVE. Catalysis depends on His-450, which acts as the For 3-hydroxyacyl-CoA dehydrogenase activity. Residue Asn-453 participates in NAD(+) binding. Residues Asn-500 and Tyr-660 each contribute to the substrate site.

It in the N-terminal section; belongs to the enoyl-CoA hydratase/isomerase family. This sequence in the C-terminal section; belongs to the 3-hydroxyacyl-CoA dehydrogenase family. In terms of assembly, heterotetramer of two alpha chains (FadB) and two beta chains (FadA).

The enzyme catalyses a (3S)-3-hydroxyacyl-CoA + NAD(+) = a 3-oxoacyl-CoA + NADH + H(+). It catalyses the reaction a (3S)-3-hydroxyacyl-CoA = a (2E)-enoyl-CoA + H2O. The catalysed reaction is a 4-saturated-(3S)-3-hydroxyacyl-CoA = a (3E)-enoyl-CoA + H2O. It carries out the reaction (3S)-3-hydroxybutanoyl-CoA = (3R)-3-hydroxybutanoyl-CoA. The enzyme catalyses a (3Z)-enoyl-CoA = a 4-saturated (2E)-enoyl-CoA. It catalyses the reaction a (3E)-enoyl-CoA = a 4-saturated (2E)-enoyl-CoA. Its pathway is lipid metabolism; fatty acid beta-oxidation. In terms of biological role, involved in the aerobic and anaerobic degradation of long-chain fatty acids via beta-oxidation cycle. Catalyzes the formation of 3-oxoacyl-CoA from enoyl-CoA via L-3-hydroxyacyl-CoA. It can also use D-3-hydroxyacyl-CoA and cis-3-enoyl-CoA as substrate. This Yersinia pseudotuberculosis serotype O:1b (strain IP 31758) protein is Fatty acid oxidation complex subunit alpha.